The chain runs to 515 residues: Pre-glycoprotein polyprotein GP complex (515 aa).

A lipid anchor (N-myristoyl glycine; by host) is attached at G2. Residues 2–17 (GQVIGFFQSLPEIINE) lie on the Extracellular side of the membrane. Residues 18–33 (ALNIALICVALLATIK) form a helical membrane-spanning segment. The Cytoplasmic segment spans residues 34–58 (GMVNIWKSGLIQLLFFLTLAGRSCS). Residue C57 participates in Zn(2+) binding. The Extracellular segment spans residues 59 to 453 (HSFTIGRFHE…QGRTPLSLVD (395 aa)). 4 disulfide bridges follow: C87–C255, C300–C313, C322–C331, and C385–C406. N-linked (GlcNAc...) asparagine; by host glycans are attached at residues N90, N112, N127, N180, and N248. N386, N394, and N416 each carry an N-linked (GlcNAc...) asparagine; by host glycan. A helical transmembrane segment spans residues 454–474 (LCFWSTLFYISTLFAHLVGFP). Over 475 to 515 (THRHLIGEGCPKPHRLTGSGICSCGHYGIPGKPVRWTKMSR) the chain is Cytoplasmic. Zn(2+) is bound by residues H476, H478, C484, H488, C496, and C498.

The protein belongs to the arenaviridae GPC protein family. As to quaternary structure, interacts with glycoprotein G2. Part of the GP complex (GP-C) together with glycoprotein G1 and glycoprotein G2. The GP-complex interacts with protein Z, which interacts with ribonucleocapsid; these interactions may induce virion budding. Homotrimer; disulfide-linked. In pre-fusion state, G1 homotrimers bind G2 homotrimers via ionic interactions. Part of the GP complex (GP-C) together with glycoprotein G2 and the stable signal peptide. The GP-complex interacts with protein Z, which interacts with ribonucleocapsid; these interactions may induce virion budding. In terms of assembly, homotrimer. Interacts with the stable signal peptide. In pre-fusion state, G2 homotrimers bind G1 homotrimers via ionic interactions. Part of the GP complex (GP-C) together with glycoprotein G1 and the stable signal peptide. Acidification in the endosome triggers rearrangements, which ultimately leads to a 6 helix bundle formed by the two heptad repeat domains (HR1 and HR2) in post-fusion state. The GP-complex interacts with protein Z, which interacts with ribonucleocapsid; these interactions may induce virion budding. Post-translationally, specific enzymatic cleavages in vivo yield mature proteins. GP-C polyprotein is cleaved in the endoplasmic reticulum by the host protease MBTPS1. Only cleaved glycoprotein is incorporated into virions. The SSP remains stably associated with the GP complex following cleavage by signal peptidase and plays crucial roles in the trafficking of GP through the secretory pathway. In terms of processing, myristoylation is necessary for GP2-mediated fusion activity.

It is found in the virion membrane. Its subcellular location is the host endoplasmic reticulum membrane. The protein resides in the host Golgi apparatus membrane. It localises to the host cell membrane. In terms of biological role, functions as a cleaved signal peptide that is retained as the third component of the GP complex (GP-C). Helps to stabilize the spike complex in its native conformation. The SSP is required for efficient glycoprotein expression, post-translational maturation cleavage of G1 and G2, glycoprotein transport to the cell surface plasma membrane, formation of infectious virus particles, and acid pH-dependent glycoprotein-mediated cell fusion. Functionally, forms the virion spikes together with glycoprotein G2. The glycoprotein spike trimers are connected to the underlying matrix. Mediates virus attachment to host receptor alpha-dystroglycan DAG1. This attachment induces virion internalization predominantly through clathrin- and caveolin-independent endocytosis. Its function is as follows. Forms the virion spikes together with glycoprotein G1. The glycoprotein spike trimers are connected to the underlying matrix. Class I viral fusion protein that directs fusion of viral and host endosomal membranes, leading to delivery of the nucleocapsid into the cytoplasm. Membrane fusion is mediated by irreversible conformational changes induced by acidification. The polypeptide is Pre-glycoprotein polyprotein GP complex (Latino mammarenavirus (isolate Rat/Bolivia/MARU 1924/1965) (LATV)).